The primary structure comprises 119 residues: MANIKKGDLVQVITGRTQAKGGDRGKQGKVLSVLVERNRVVVEGVNFITKHVRVGQTQRGSKTGGIETVEAPIHISNVALVDPESKKPTRVGFRTEQVEKDGVSKTVRVRYAKKSGKDL.

The protein belongs to the universal ribosomal protein uL24 family. Part of the 50S ribosomal subunit.

Functionally, one of two assembly initiator proteins, it binds directly to the 5'-end of the 23S rRNA, where it nucleates assembly of the 50S subunit. One of the proteins that surrounds the polypeptide exit tunnel on the outside of the subunit. The polypeptide is Large ribosomal subunit protein uL24 (Clavibacter michiganensis subsp. michiganensis (strain NCPPB 382)).